The following is a 205-amino-acid chain: MPAYNPSARFDKAPFHSSLFQYCVIPKRLGVSGRRQVRNHMSIDNYVIGDQVELHEATSSKVKKVSSNHRTRFTQGVTMRILITGGTGFVGFQLIKLLSSHELLVLTRDLTKAAQRFAHIPSQNLQLLSPLDELSDFNGIDAIINLRPDNRLPINAEEKPKAGIARSRLDITEQLVEKIRASAHPPAVFLSGSAWFLCDQQAACL.

It belongs to the NAD(P)-dependent epimerase/dehydratase family.

This chain is Protein Rcp (rcp), found in Vibrio cholerae serotype O1 (strain ATCC 39315 / El Tor Inaba N16961).